The chain runs to 277 residues: Carbonyl reductase [NADPH] 1 (277 aa).

At serine 2 the chain carries N-acetylserine. A phosphoserine mark is found at serine 2 and serine 30. NADP(+) contacts are provided by residues 10 to 34, 63 to 64, and asparagine 90; these read VTGA…GDVV and DI. Residues 95-97 and glutamine 106 contribute to the glutathione site; that span reads FKV. Position 140 (serine 140) interacts with substrate. 193–194 provides a ligand contact to glutathione; that stretch reads AY. Residue tyrosine 194 is the Proton acceptor of the active site. NADP(+)-binding positions include 194–198 and 231–233; these read YGVTK and VRT. Lysine 239 is modified (N6-1-carboxyethyl lysine). The segment at 258 to 277 is disordered; the sequence is PPDAEGPHGQFVQDKKVEPW.

Belongs to the short-chain dehydrogenases/reductases (SDR) family. In terms of assembly, monomer.

The protein resides in the cytoplasm. The catalysed reaction is a secondary alcohol + NADP(+) = a ketone + NADPH + H(+). The enzyme catalyses prostaglandin F2alpha + NADP(+) = prostaglandin E2 + NADPH + H(+). It carries out the reaction prostaglandin E1 + NADP(+) = 15-oxoprostaglandin E1 + NADPH + H(+). It catalyses the reaction menadione + NADPH + H(+) = menadiol + NADP(+). The catalysed reaction is prostaglandin D2 + NADP(+) = 15-oxoprostaglandin D2 + NADPH + H(+). The enzyme catalyses prostaglandin E2 + NADP(+) = 15-oxoprostaglandin E2 + NADPH + H(+). It carries out the reaction prostaglandin F2alpha + NADP(+) = 15-oxoprostaglandin F2alpha + NADPH + H(+). It catalyses the reaction daunorubicin + NADPH + H(+) = 13-dihydrodaunorubicin + NADP(+). The catalysed reaction is S-nitrosoglutathione + NADPH + H(+) = S-(hydroxysulfenamide)glutathione + NADP(+). The enzyme catalyses corticosterone + NADPH + H(+) = 20beta-dihydrocorticosterone + NADP(+). It carries out the reaction a primary alcohol + NADP(+) = an aldehyde + NADPH + H(+). It catalyses the reaction cortisol + NADPH + H(+) = 20beta-dihydrocortisol + NADP(+). NADPH-dependent reductase with broad substrate specificity. Catalyzes the reduction of a wide variety of carbonyl compounds including quinones, prostaglandins, menadione, plus various xenobiotics. Catalyzes the reduction of the antitumor anthracyclines doxorubicin and daunorubicin to the cardiotoxic compounds doxorubicinol and daunorubicinol. Can convert prostaglandin E to prostaglandin F2-alpha. Can bind glutathione, which explains its higher affinity for glutathione-conjugated substrates. Catalyzes the reduction of S-nitrosoglutathione. In addition, participates in the glucocorticoid metabolism by catalyzing the NADPH-dependent cortisol/corticosterone into 20beta-dihydrocortisol (20b-DHF) or 20beta-corticosterone (20b-DHB), which are weak agonists of NR3C1 and NR3C2 in adipose tissue. The sequence is that of Carbonyl reductase [NADPH] 1 from Mus musculus (Mouse).